The primary structure comprises 61 residues: UPF0434 protein Pput_3813 (61 aa).

The protein belongs to the UPF0434 family.

This chain is UPF0434 protein Pput_3813, found in Pseudomonas putida (strain ATCC 700007 / DSM 6899 / JCM 31910 / BCRC 17059 / LMG 24140 / F1).